We begin with the raw amino-acid sequence, 616 residues long: Pentatricopeptide repeat-containing protein At4g15720 (616 aa).

PPR repeat units follow at residues 63 to 93 (DTFT…MCEP), 94 to 128 (NVVS…RPVP), 130 to 164 (NEYT…GLRR), 165 to 199 (NIVV…GRNV), 200 to 228 (VSWT…FNAA), 235 to 269 (NQFM…GYES), 270 to 300 (NTVV…IRCH), 301 to 335 (SVIS…RINP), 336 to 371 (NYVT…GVVP), and 372 to 402 (DSRH…IEVG). Positions 409-484 (LWGALLSAGR…ERACSWIENK (76 aa)) are type E motif. The tract at residues 485-515 (DSVYVFHAGDLSCDESGEIERFLKDLEKRMK) is type E(+) motif. The type DYW motif stretch occupies residues 522–616 (SSSMITTSSS…NGSCTCRDYW (95 aa)).

The protein belongs to the PPR family. PCMP-H subfamily.

This Arabidopsis thaliana (Mouse-ear cress) protein is Pentatricopeptide repeat-containing protein At4g15720 (PCMP-H1).